We begin with the raw amino-acid sequence, 79 residues long: Acyl carrier protein (79 aa).

In terms of domain architecture, Carrier spans 2–77; that stretch reads SDIEARVKKI…NAIDYANTHH (76 aa). Serine 37 is modified (O-(pantetheine 4'-phosphoryl)serine).

It belongs to the acyl carrier protein (ACP) family. In terms of processing, 4'-phosphopantetheine is transferred from CoA to a specific serine of apo-ACP by AcpS. This modification is essential for activity because fatty acids are bound in thioester linkage to the sulfhydryl of the prosthetic group.

The protein resides in the cytoplasm. The protein operates within lipid metabolism; fatty acid biosynthesis. Carrier of the growing fatty acid chain in fatty acid biosynthesis. This chain is Acyl carrier protein, found in Polaromonas naphthalenivorans (strain CJ2).